A 249-amino-acid polypeptide reads, in one-letter code: MTQRLKDKLAVITGGANGIGRAIAERFAVEGADIAIADLVPAPEAEAAIRNLGRRVLTVKCDVSQPGDVEAFGKQVISTFGRCDILVNNAGIYPLIPFDELTFEQWKKTFEINVDSGFLMAKAFVPGMKRNGWGRIINLTSTTYWLKIEAYTHYISTKAANIGFTRALASDLGKDGITVNAIAPSLVRTATTEASALSAMFDVLPNMLQAIPRLQVPLDLTGAAAFLASDDASFITGQTLAVDGGMVRH.

NAD(+) contacts are provided by residues asparagine 17–isoleucine 19, aspartate 38, cysteine 61–valine 63, asparagine 89, and tyrosine 93. Serine 141 contributes to the substrate binding site. Tyrosine 154 serves as the catalytic Proton acceptor. NAD(+) contacts are provided by residues lysine 158, proline 184–valine 187, and threonine 191.

It belongs to the short-chain dehydrogenases/reductases (SDR) family. In terms of assembly, homotetramer.

The catalysed reaction is (S)-1-phenylethanol + NAD(+) = acetophenone + NADH + H(+). Its function is as follows. Catalyzes the NAD-dependent stereospecific oxidation of (S)-1-phenylethanol to acetophenone in the degradation of ethylbenzene. The polypeptide is (S)-1-Phenylethanol dehydrogenase (ped) (Aromatoleum aromaticum (strain DSM 19018 / LMG 30748 / EbN1) (Azoarcus sp. (strain EbN1))).